Reading from the N-terminus, the 170-residue chain is Adenine phosphoribosyltransferase (170 aa).

Belongs to the purine/pyrimidine phosphoribosyltransferase family. Homodimer.

The protein localises to the cytoplasm. It carries out the reaction AMP + diphosphate = 5-phospho-alpha-D-ribose 1-diphosphate + adenine. Its pathway is purine metabolism; AMP biosynthesis via salvage pathway; AMP from adenine: step 1/1. Functionally, catalyzes a salvage reaction resulting in the formation of AMP, that is energically less costly than de novo synthesis. In Streptococcus pneumoniae (strain Hungary19A-6), this protein is Adenine phosphoribosyltransferase.